The chain runs to 207 residues: Imidazole glycerol phosphate synthase subunit HisH (207 aa).

Residues 1 to 207 (MIAIVDYNMG…ENFTKYRNLK (207 aa)) form the Glutamine amidotransferase type-1 domain. Residue C79 is the Nucleophile of the active site. Catalysis depends on residues H185 and E187.

As to quaternary structure, heterodimer of HisH and HisF.

The protein localises to the cytoplasm. The catalysed reaction is 5-[(5-phospho-1-deoxy-D-ribulos-1-ylimino)methylamino]-1-(5-phospho-beta-D-ribosyl)imidazole-4-carboxamide + L-glutamine = D-erythro-1-(imidazol-4-yl)glycerol 3-phosphate + 5-amino-1-(5-phospho-beta-D-ribosyl)imidazole-4-carboxamide + L-glutamate + H(+). It carries out the reaction L-glutamine + H2O = L-glutamate + NH4(+). It functions in the pathway amino-acid biosynthesis; L-histidine biosynthesis; L-histidine from 5-phospho-alpha-D-ribose 1-diphosphate: step 5/9. Its function is as follows. IGPS catalyzes the conversion of PRFAR and glutamine to IGP, AICAR and glutamate. The HisH subunit catalyzes the hydrolysis of glutamine to glutamate and ammonia as part of the synthesis of IGP and AICAR. The resulting ammonia molecule is channeled to the active site of HisF. This Sulfurimonas denitrificans (strain ATCC 33889 / DSM 1251) (Thiomicrospira denitrificans (strain ATCC 33889 / DSM 1251)) protein is Imidazole glycerol phosphate synthase subunit HisH.